The primary structure comprises 506 residues: Abscisic acid 8'-hydroxylase 2 (506 aa).

Residues 3–23 traverse the membrane as a helical segment; sequence FLLFFVFVTAAVLCFVVPAFL. A heme-binding site is contributed by C437.

It belongs to the cytochrome P450 family. It depends on heme as a cofactor. As to expression, in internodes and expanding leaves. Weak expression in seedlings.

It is found in the membrane. It catalyses the reaction 2-cis-(+)-abscisate + reduced [NADPH--hemoprotein reductase] + O2 = (+)-8'-hydroxyabscisate + oxidized [NADPH--hemoprotein reductase] + H2O + H(+). It participates in plant hormone degradation; abscisic acid degradation. Functionally, involved in the oxidative degradation of abscisic acid. This chain is Abscisic acid 8'-hydroxylase 2 (CYP707A6), found in Oryza sativa subsp. indica (Rice).